A 456-amino-acid chain; its full sequence is Enolase (456 aa).

(2R)-2-phosphoglycerate is bound at residue Gln169. Glu211 serves as the catalytic Proton donor. Asp252, Glu314, and Asp341 together coordinate Mg(2+). (2R)-2-phosphoglycerate contacts are provided by Lys366, Arg395, Ser396, and Lys417. Catalysis depends on Lys366, which acts as the Proton acceptor.

Belongs to the enolase family. Mg(2+) is required as a cofactor.

Its subcellular location is the cytoplasm. The protein localises to the secreted. The protein resides in the cell surface. It carries out the reaction (2R)-2-phosphoglycerate = phosphoenolpyruvate + H2O. It functions in the pathway carbohydrate degradation; glycolysis; pyruvate from D-glyceraldehyde 3-phosphate: step 4/5. In terms of biological role, catalyzes the reversible conversion of 2-phosphoglycerate (2-PG) into phosphoenolpyruvate (PEP). It is essential for the degradation of carbohydrates via glycolysis. In Metamycoplasma arthritidis (strain 158L3-1) (Mycoplasma arthritidis), this protein is Enolase.